A 238-amino-acid polypeptide reads, in one-letter code: CS1 fimbrial subunit B (238 aa).

The N-terminal stretch at Met-1–Ala-17 is a signal peptide.

Its subcellular location is the fimbrium. In terms of biological role, might function as a shuttle protein in the transport of fimbria through the periplasmic space or might function as an adhesin. The chain is CS1 fimbrial subunit B (csoB) from Escherichia coli.